The following is a 512-amino-acid chain: Glutathione-binding protein GsiB (512 aa).

The signal sequence occupies residues 1 to 26; the sequence is MARAVHRSGLVALGIATALMASCAFA.

Belongs to the bacterial solute-binding protein 5 family. The complex is composed of two ATP-binding proteins (GsiA), two transmembrane proteins (GsiC and GsiD) and a solute-binding protein (GsiB).

Its subcellular location is the periplasm. Its function is as follows. Part of the ABC transporter complex GsiABCD involved in glutathione import. Binds glutathione. The sequence is that of Glutathione-binding protein GsiB from Escherichia coli O1:K1 / APEC.